Consider the following 147-residue polypeptide: Hemoglobin subunit gamma-1 (147 aa).

Gly2 carries the N-acetylglycine; in form Hb F1 modification. The 145-residue stretch at 3-147 folds into the Globin domain; the sequence is HFTEEDKATI…VASALSSRYH (145 aa). Thr13 is modified (phosphothreonine). A phosphoserine mark is found at Ser45, Ser51, and Ser53. An N6-acetyllysine modification is found at Lys60. Residue His64 participates in heme b binding. Residue Lys83 is modified to N6-acetyllysine. Position 93 (His93) interacts with heme b. S-nitrosocysteine is present on Cys94. Phosphoserine is present on Ser140.

The protein belongs to the globin family. Heterotetramer of two alpha chains and two gamma chains in fetal hemoglobin (Hb F). In the case of deletions affecting one or more of the alpha chains, the excess gamma chains form homotetramers that exhibit neither Bohr effect nor heme-heme cooperativity (hemoglobin Bart's). Post-translationally, acetylation of Gly-2 converts Hb F to the minor Hb F1. Red blood cells.

Gamma chains make up the fetal hemoglobin F, in combination with alpha chains. This is Hemoglobin subunit gamma-1 (HBG1) from Homo sapiens (Human).